Consider the following 708-residue polypeptide: Soluble guanylate cyclase gcy-37 (708 aa).

Histidine 105 lines the heme pocket. A coiled-coil region spans residues 368 to 409 (LNQSRICQMELNKKLEETMKKMKKMTEELEVKKSQTDRLLFE). A Guanylate cyclase domain is found at 434 to 562 (SVIFTDIPDF…NTVNVTKSIC (129 aa)). Mg(2+)-binding residues include aspartate 439 and aspartate 483.

It belongs to the adenylyl cyclase class-4/guanylyl cyclase family. Heterodimer; with other soluble guanylate cyclases. Heme is required as a cofactor. Expressed in a small number of neurons, corresponding to URX, AQR and PQR neurons.

The protein localises to the cytoplasm. The catalysed reaction is GTP = 3',5'-cyclic GMP + diphosphate. Its activity is regulated as follows. May be regulated by molecular oxygen. Probably not activated by nitric oxide (NO). Its function is as follows. Synthesizes cyclic GMP (cGMP) from GTP. May play a role in sensory neurons. The polypeptide is Soluble guanylate cyclase gcy-37 (gcy-37) (Caenorhabditis elegans).